A 1468-amino-acid chain; its full sequence is Centrosomal protein of 290 kDa (1468 aa).

Coiled coils occupy residues 1-25 (ERQL…VGEK), 52-121 (SLSE…IEQA), 172-292 (KMYE…DEKA), 318-528 (VASK…EAQK), 559-592 (RIIL…ILSR), 627-688 (HTLK…QADN), and 736-1441 (IKLK…SEQF). Positions 1060–1468 (TTGLTVDQVM…QENPVNFPIY (409 aa)) are self-association (with itself or N-terminus). The interval 1130 to 1152 (LSKDAYSRPSTSGIDSDDHYQRE) is disordered.

Part of the tectonic-like complex (also named B9 complex). Interacts with ATF4 via its N-terminal region. Associates with the BBSome complex, interacting (via N-terminus) with BBS4. Interacts with IQCB1/NPHP5; IQCB1 and CEP290/NPHP6 are proposed to form a functional NPHP5-6 module localized to the centrosome. Interacts with NPHP4; the interaction likely requires additional interactors. Interacts with ZNF423, FAM161A, CEP162, CEP162, CEP131, TALPID3, CCDC13, CC2D2A, RPGRIP1. Can self-associate (homo- or heteromeric). Interacts with CCP110; required for suppressing cilia formation. Interacts with RPGR. Associates (via C-terminus) with microtubules; association to microtubule is reduced in response to cellular stress, such as ultraviolet light (UV) radiation or heat shock, in a process that requires p38 MAP kinase signaling. Interacts with FAM161A. Interacts with PCM1. Interacts with CCDC66. Interacts with ARMC9 and CSPP1. In terms of processing, ubiquitinated. May undergo monoubiquitination; monoubiquitination is inhibited in response to cellular stress, such as ultraviolet light (UV) radiation or heat shock, but does not cause its displacement from centriolar satellites.

Its subcellular location is the cytoplasm. The protein localises to the cytoskeleton. It localises to the microtubule organizing center. The protein resides in the centrosome. It is found in the centriolar satellite. Its subcellular location is the nucleus. The protein localises to the cell projection. It localises to the cilium. The protein resides in the cilium basal body. It is found in the centriole. Its subcellular location is the cytoplasmic vesicle. Involved in early and late steps in cilia formation. Its association with CCP110 is required for inhibition of primary cilia formation by CCP110. May play a role in early ciliogenesis in the disappearance of centriolar satellites and in the transition of primary ciliar vesicles (PCVs) to capped ciliary vesicles (CCVs). Required for the centrosomal recruitment of RAB8A and for the targeting of centriole satellite proteins to centrosomes such as of PCM1. Required for the correct localization of ciliary and phototransduction proteins in retinal photoreceptor cells; may play a role in ciliary transport processes. Required for efficient recruitment of RAB8A to primary cilium. In the ciliary transition zone is part of the tectonic-like complex which is required for tissue-specific ciliogenesis and may regulate ciliary membrane composition. Involved in regulation of the BBSome complex integrity, specifically for presence of BBS2, BBS5 and BBS8/TTC8 in the complex, and in ciliary targeting of selected BBSome cargos. May play a role in controlling entry of the BBSome complex to cilia possibly implicating IQCB1/NPHP5. Activates ATF4-mediated transcription. This Bos taurus (Bovine) protein is Centrosomal protein of 290 kDa (CEP290).